Here is an 860-residue protein sequence, read N- to C-terminus: MSRGGSYPHLLWDVRKRSLGLEDPSRLRSRYLGRREFIQRLKLEATLNVHDGCVNTICWNDTGEYILSGSDDTKLVISNPYSRKVLTTIRSGHRANIFSAKFLPCTNDKQIVSCSGDGVIFYTNVEQDAETNRQCQFTCHYGTTYEIMTVPNDPYTFLSCGEDGTVRWFDTRIKTSCTKEDCKDDILINCRRAATSVAICPPIPYYLAVGCSDSSVRIYDRRMLGTRATGNYAGRGTTGMVARFIPSHLNNKSCRVTSLCYSEDGQEILVSYSSDYIYLFDPKDDTARELKTPSAEERREELRQPPVKRLRLRGDWSDTGPRARPESERERDGEQSPNVSLMQRMSDMLSRWFEEASEVAQSNRGRGRSRPRGGTSQSDISTLPTVPSSPDLEVSETAMEVDTPAEQFLQPSTSSTMSAQAHSTSSPTESPHSTPLLSSPDSEQRQSVEASGHHTHHQSDNNNEKLSPKPGTGEPVLSLHYSTEGTTTSTIKLNFTDEWSSIASSSRGIGSHCKSEGQEESFVPQSSVQPPEGDSETKAPEESSEDVTKYQEGVSAENPVENHINITQSDKFTAKPLDSNSGERNDLNLDRSCGVPEESASSEKAKEPETSDQTSTESATNENNTNPEPQFQTEATGPSAHEETSTRDSALQDTDDSDDDPVLIPGARYRAGPGDRRSAVARIQEFFRRRKERKEMEELDTLNIRRPLVKMVYKGHRNSRTMIKEANFWGANFVMSGSDCGHIFIWDRHTAEHLMLLEADNHVVNCLQPHPFDPILASSGIDYDIKIWSPLEESRIFNRKLADEVITRNELMLEETRNTITVPASFMLRMLASLNHIRADRLEGDRSEGSGQENENEDEE.

WD repeat units follow at residues 49-88, 92-133, 139-179, 189-229, and 251-290; these read VHDG…VLTT, GHRA…ETNR, CHYG…SCTK, NCRR…TRAT, and NKSC…AREL. Basic and acidic residues-rich tracts occupy residues 288–303 and 312–334; these read RELK…EELR and LRGD…RDGE. 4 disordered regions span residues 288–340, 355–392, 407–490, and 502–675; these read RELK…PNVS, EASE…SPDL, QFLQ…TTST, and IASS…GPGD. S336 is subject to Phosphoserine. Composition is skewed to polar residues over residues 379-388 and 409-421; these read DISTLPTVPS and LQPS…SAQA. The span at 422–441 shows a compositional bias: low complexity; it reads HSTSSPTESPHSTPLLSSPD. Positions 457–467 are enriched in basic and acidic residues; it reads HQSDNNNEKLS. The span at 480–490 shows a compositional bias: polar residues; it reads HYSTEGTTTST. Residues 502-511 show a composition bias toward low complexity; the sequence is IASSSRGIGS. The segment covering 535-549 has biased composition (basic and acidic residues); it reads SETKAPEESSEDVTK. Residues 614–626 show a composition bias toward low complexity; sequence TSTESATNENNTN. The span at 627-636 shows a compositional bias: polar residues; the sequence is PEPQFQTEAT. S649 carries the phosphoserine modification. At T654 the chain carries Phosphothreonine. S657 carries the phosphoserine modification. Residues 676–705 form the IQ domain; sequence RRSAVARIQEFFRRRKERKEMEELDTLNIR. 2 WD repeats span residues 718–756 and 759–798; these read NSRT…HLML and ADNH…RIFN. Phosphoserine occurs at positions 847 and 850.

In terms of assembly, interacts with the nuclear receptors NR3C1 and AR in the presence of ligand. Interacts with DDB1, CUL4A and CUL4B. In terms of tissue distribution, highly expressed in skeletal muscle and testis. Expressed to a lesser degree in heart, prostate, and adrenal gland.

Its subcellular location is the nucleus. The protein operates within protein modification; protein ubiquitination. In terms of biological role, ligand-dependent coactivator of nuclear receptors. Enhance transcriptional activity of the nuclear receptors NR3C1 and AR. May function as a substrate receptor for CUL4-DDB1 E3 ubiquitin-protein ligase complex. In Homo sapiens (Human), this protein is DDB1- and CUL4-associated factor 6 (DCAF6).